A 94-amino-acid chain; its full sequence is Large ribosomal subunit protein bL27 (94 aa).

Positions 1 to 9 (MLKLNLQFF) are excised as a propeptide.

Belongs to the bacterial ribosomal protein bL27 family. Post-translationally, the N-terminus is cleaved by ribosomal processing cysteine protease Prp.

This chain is Large ribosomal subunit protein bL27, found in Staphylococcus epidermidis (strain ATCC 35984 / DSM 28319 / BCRC 17069 / CCUG 31568 / BM 3577 / RP62A).